Reading from the N-terminus, the 168-residue chain is Phosphopantetheine adenylyltransferase (168 aa).

S8 contacts substrate. ATP is bound by residues 8–9 (SF) and H16. Substrate is bound by residues K40, T72, and R86. ATP-binding positions include 87–89 (GLR), E97, and 122–128 (YSFLSSS).

This sequence belongs to the bacterial CoaD family. As to quaternary structure, homohexamer. Mg(2+) serves as cofactor.

The protein localises to the cytoplasm. The catalysed reaction is (R)-4'-phosphopantetheine + ATP + H(+) = 3'-dephospho-CoA + diphosphate. It participates in cofactor biosynthesis; coenzyme A biosynthesis; CoA from (R)-pantothenate: step 4/5. In terms of biological role, reversibly transfers an adenylyl group from ATP to 4'-phosphopantetheine, yielding dephospho-CoA (dPCoA) and pyrophosphate. The polypeptide is Phosphopantetheine adenylyltransferase (Thermosynechococcus vestitus (strain NIES-2133 / IAM M-273 / BP-1)).